The following is a 146-amino-acid chain: Snaclec rhodocytin subunit beta (146 aa).

The signal sequence occupies residues 1–23; it reads MGRFIFVSFGLLVVFLSLSGTGA. 3 cysteine pairs are disulfide-bonded: C25-C36, C53-C142, and C119-C134. In terms of domain architecture, C-type lectin spans 32–143; the sequence is YEGHCYKPFN…CSSTCSFVCK (112 aa).

Belongs to the snaclec family. In terms of assembly, dimer (non-covalently linked) of heterodimers of subunits alpha and beta (disulfide-linked). Expressed by the venom gland.

It localises to the secreted. Elicits platelet aggregation by the binding to the C-type lectin domain family 1 member B (CLEC1B/CLEC2). Binding leads to tyrosine phosphorylation in the cytoplasmic tail of CLEC1B, which promotes the binding of spleen tyrosine kinase (Syk), subsequent activation of PLCgamma2, and platelet activation and aggregation. Binding to GPIbalpha (GP1BA) and alpha2/beta-1 (ITGA2/ITGB1) may also induce aggregation, but this is controversial. This is Snaclec rhodocytin subunit beta from Calloselasma rhodostoma (Malayan pit viper).